The primary structure comprises 417 residues: DnaJ protein homolog ANJ1 (417 aa).

The 66-residue stretch at 11–76 (STRYYEILGV…REIYDQYGED (66 aa)) folds into the J domain. A CR-type zinc finger spans residues 135-219 (GTTKKLSLSR…CKGEKVVQEK (85 aa)). 3 CXXCXGXG motif repeats span residues 148–155 (CSKCTGKG), 164–171 (CSGCQGTG), and 191–198 (CNECKGTG). One copy of the CXXCXGXG motif; approximate repeat lies at 207 to 214 (CPQCKGEK). The segment at 384-417 (IEEEMKRKQTQAQQEAYDEDDEPAGGQRVQCAQQ) is disordered. Cysteine 414 is modified (cysteine methyl ester). Cysteine 414 carries S-farnesyl cysteine lipidation. The propeptide at 415 to 417 (AQQ) is removed in mature form.

Its subcellular location is the membrane. Plays a continuous role in plant development probably in the structural organization of compartments. The protein is DnaJ protein homolog ANJ1 of Atriplex nummularia (Old man saltbush).